Reading from the N-terminus, the 476-residue chain is Bifunctional protein HldE (476 aa).

Residues Met-1–Gly-319 are ribokinase. An ATP-binding site is contributed by Asn-195 to Glu-198. Asp-264 is a catalytic residue. The interval Met-344–Gly-476 is cytidylyltransferase.

In the N-terminal section; belongs to the carbohydrate kinase PfkB family. This sequence in the C-terminal section; belongs to the cytidylyltransferase family. Homodimer.

It carries out the reaction D-glycero-beta-D-manno-heptose 7-phosphate + ATP = D-glycero-beta-D-manno-heptose 1,7-bisphosphate + ADP + H(+). The enzyme catalyses D-glycero-beta-D-manno-heptose 1-phosphate + ATP + H(+) = ADP-D-glycero-beta-D-manno-heptose + diphosphate. The protein operates within nucleotide-sugar biosynthesis; ADP-L-glycero-beta-D-manno-heptose biosynthesis; ADP-L-glycero-beta-D-manno-heptose from D-glycero-beta-D-manno-heptose 7-phosphate: step 1/4. It functions in the pathway nucleotide-sugar biosynthesis; ADP-L-glycero-beta-D-manno-heptose biosynthesis; ADP-L-glycero-beta-D-manno-heptose from D-glycero-beta-D-manno-heptose 7-phosphate: step 3/4. In terms of biological role, catalyzes the phosphorylation of D-glycero-D-manno-heptose 7-phosphate at the C-1 position to selectively form D-glycero-beta-D-manno-heptose-1,7-bisphosphate. Its function is as follows. Catalyzes the ADP transfer from ATP to D-glycero-beta-D-manno-heptose 1-phosphate, yielding ADP-D-glycero-beta-D-manno-heptose. The protein is Bifunctional protein HldE of Aliivibrio fischeri (strain ATCC 700601 / ES114) (Vibrio fischeri).